The chain runs to 670 residues: Leiomodin-3 (670 aa).

Disordered stretches follow at residues 34 to 72 (EMDD…EEID), 94 to 120 (EIAP…GSFD), 139 to 165 (EEER…EDKV), and 202 to 274 (EDKV…NWVP). Basic and acidic residues-rich tracts occupy residues 40–63 (PDER…RDCT), 97–112 (PDER…DQTD), 153–163 (TNEEHEAKNED), 205–214 (VCDKPVKTDL), and 249–261 (TETK…KEDS). Residues 150 to 183 (SQKTNEEHEAKNEDKVEELELVYEEIVEEVEGGQ) adopt a coiled-coil conformation. The stretch at 464–494 (DRQRQQRMEEQKLQQMKEQRKVMEMYEDSLN) forms a coiled coil. Positions 517 to 556 (NGAEDIPEDSPEPSPQPSPPHQLCKTQHLAPQQHPPNLST) are disordered. Positions 637–656 (PRDHLLSEIRQSNVAYLKAV) constitute a WH2 domain.

Belongs to the tropomodulin family. Expressed in muscle (at protein level).

Its subcellular location is the cytoplasm. It localises to the myofibril. The protein resides in the sarcomere. The protein localises to the a band. It is found in the m line. Its subcellular location is the cytoskeleton. In terms of biological role, essential for the organization of sarcomeric thin filaments in skeletal muscle. This chain is Leiomodin-3, found in Danio rerio (Zebrafish).